A 147-amino-acid polypeptide reads, in one-letter code: SPI-1 type 3 secretion system pilotin (147 aa).

The signal sequence occupies residues 1–15; that stretch reads MKKFYSCLPVFLLIG. Residue cysteine 16 is the site of N-palmitoyl cysteine attachment. Cysteine 16 is lipidated: S-diacylglycerol cysteine.

This sequence belongs to the InvH family.

The protein localises to the cell outer membrane. Involved in the synthesis of the type III secretion system (T3SS), also called injectisome, which is used to inject bacterial effector proteins into eukaryotic host cells. Pilot protein that is required for the proper localization of the secretin InvG/SctC in the outer membrane. Necessary for efficient adherence and entry of these organisms into cultured epithelial cells. The sequence is that of SPI-1 type 3 secretion system pilotin from Salmonella choleraesuis (strain SC-B67).